The sequence spans 343 residues: RNA 3'-terminal phosphate cyclase (343 aa).

ATP-binding positions include Gln102 and 284–288 (FLGDQ). His308 serves as the catalytic Tele-AMP-histidine intermediate.

Belongs to the RNA 3'-terminal cyclase family. Type 1 subfamily.

The protein localises to the cytoplasm. The catalysed reaction is a 3'-end 3'-phospho-ribonucleotide-RNA + ATP = a 3'-end 2',3'-cyclophospho-ribonucleotide-RNA + AMP + diphosphate. In terms of biological role, catalyzes the conversion of 3'-phosphate to a 2',3'-cyclic phosphodiester at the end of RNA. The mechanism of action of the enzyme occurs in 3 steps: (A) adenylation of the enzyme by ATP; (B) transfer of adenylate to an RNA-N3'P to produce RNA-N3'PP5'A; (C) and attack of the adjacent 2'-hydroxyl on the 3'-phosphorus in the diester linkage to produce the cyclic end product. The biological role of this enzyme is unknown but it is likely to function in some aspects of cellular RNA processing. The polypeptide is RNA 3'-terminal phosphate cyclase (rtcA) (Thermococcus kodakarensis (strain ATCC BAA-918 / JCM 12380 / KOD1) (Pyrococcus kodakaraensis (strain KOD1))).